The following is a 530-amino-acid chain: Ubiquitin carboxyl-terminal hydrolase 17-like protein 22 (530 aa).

Positions 80–375 (AGLQNMGNTC…QAYVLFYIQK (296 aa)) constitute a USP domain. The active-site Nucleophile is the C89. H334 (proton acceptor) is an active-site residue. Composition is skewed to basic and acidic residues over residues 382 to 392 (SESVSRGREPR) and 398 to 412 (DTDRRATQGELKRDH). 2 disordered regions span residues 382-412 (SESVSRGREPRALGAEDTDRRATQGELKRDH) and 476-530 (KNHH…LVCQ). Residues 484–495 (SSLLKLSSTTPT) show a composition bias toward low complexity. Polar residues predominate over residues 496-505 (HQESMNTGTL). Residues 510–524 (GRARRSKGKNKHSKR) are compositionally biased toward basic residues.

The protein belongs to the peptidase C19 family. USP17 subfamily.

Its subcellular location is the nucleus. The protein localises to the endoplasmic reticulum. It catalyses the reaction Thiol-dependent hydrolysis of ester, thioester, amide, peptide and isopeptide bonds formed by the C-terminal Gly of ubiquitin (a 76-residue protein attached to proteins as an intracellular targeting signal).. Its function is as follows. Deubiquitinating enzyme that removes conjugated ubiquitin from specific proteins to regulate different cellular processes that may include cell proliferation, progression through the cell cycle, apoptosis, cell migration, and the cellular response to viral infection. The polypeptide is Ubiquitin carboxyl-terminal hydrolase 17-like protein 22 (USP17L22) (Homo sapiens (Human)).